Consider the following 264-residue polypeptide: Phosphonates import ATP-binding protein PhnC (264 aa).

Positions 7–254 constitute an ABC transporter domain; that stretch reads LSIRAASKTF…KLIDIYGPEF (248 aa). 39–46 is a binding site for ATP; it reads GPSGSGKS.

Belongs to the ABC transporter superfamily. Phosphonates importer (TC 3.A.1.9.1) family. The complex is composed of two ATP-binding proteins (PhnC), two transmembrane proteins (PhnE) and a solute-binding protein (PhnD).

The protein resides in the cell inner membrane. The catalysed reaction is phosphonate(out) + ATP + H2O = phosphonate(in) + ADP + phosphate + H(+). In terms of biological role, part of the ABC transporter complex PhnCDE involved in phosphonates import. Responsible for energy coupling to the transport system. The protein is Phosphonates import ATP-binding protein PhnC of Caulobacter vibrioides (strain ATCC 19089 / CIP 103742 / CB 15) (Caulobacter crescentus).